Reading from the N-terminus, the 536-residue chain is Caspase A (536 aa).

A propeptide spans 1-273 (removed in mature form by autoprocessing); sequence MVLKTIEDNC…DSQSRMPRTD (273 aa). Residues His364 and Cys406 contribute to the active site.

This sequence belongs to the peptidase C14A family. Heterodimer formed by the tight association of the large subunit p16 and the small subunit p14. Post-translationally, autocatalytic cleavage removes the propeptide and generates the two active subunits p16 and p14 in vitro. Cannot be cleaved by ced-3 in vitro. Isoform a: Expression is restricted to the late germline pachytene stage of meiosis I in both L4 larvae and adult hermaphrodite gonads. Isoform b: Expression is restricted to the late germline pachytene stage of meiosis I in both L4 larvae and adult hermaphrodite gonads.

It catalyses the reaction Strict requirement for an Asp residue at position P1 and has a preferred cleavage sequence of Tyr-Val-Ala-Asp-|-.. With respect to regulation, inhibited by cysteine protease inhibitor iodoacetic acid (CH3COOI) but not by N-[N-(L-3-transcarboxirane-2-carbonyl)-leucyl]-agmatine (E-64) or benzyloxycarbonyl-DEVD-fluoro-methyl ketone (Z-DEVD-FMK). In terms of biological role, cysteine protease which, in vitro, cleaves itself and caspase ced-3 into their mature active forms. Also cleaves, in vitro, inactive caspase csp-2 isoform b. Required maternally to induce apoptosis in a subset of cells fated to die during embryogenesis, mostly independently of the ced-9, ced-4 and ced-3 canonical apoptosis pathway. Involved in the degeneration of dopaminergic CEP neurons in response to high Mn(2+) levels. Dispensable for regulating apoptosis during embryogenesis. The sequence is that of Caspase A from Caenorhabditis elegans.